The following is a 369-amino-acid chain: MRN complex-interacting protein (369 aa).

Serine 115 bears the Phosphoserine mark. Disordered regions lie at residues 122–150 (GGGV…PRKR), 209–245 (PSFT…PCPA), and 282–317 (AQAE…TPMP). Residues 148-151 (RKRK) carry the Nuclear localization signal (NLS) motif. The segment covering 221-230 (KGRESSREDL) has biased composition (basic and acidic residues). Residues 223–259 (RESSREDLDTMELVPRGEPPCPAQQVRTMSKWEQCLG) form a necessary for the association with the MRN complex region.

Belongs to the MRNIP family. In terms of assembly, associates with the MRE11-RAD50-NBN (MRN) damage-sensing complex; this association is constitutive. Interacts with MRE11. Interacts with NBN. Interacts with RAD50. Phosphorylated; phosphorylation is constitutive and occurs in the absence of any DNA-damaging stimulus. Phosphorylation on Ser-115 is necessary for its nuclear retention.

The protein localises to the nucleus. It is found in the nucleoplasm. Functionally, plays a role in the cellular response to DNA damage and the maintenance of genome stability through its association with the MRN damage-sensing complex. Promotes chromatin loading and activity of the MRN complex to facilitate subsequent ATM-mediated DNA damage response signaling and DNA repair. This is MRN complex-interacting protein from Bos taurus (Bovine).